A 372-amino-acid polypeptide reads, in one-letter code: Chaperone protein DnaJ (372 aa).

One can recognise a J domain in the interval 5 to 70 (DYYELLEISR…EKKSIYDRYG (66 aa)). The CR-type zinc-finger motif lies at 134–211 (GCNKEINYKY…CKGTGYEEVK (78 aa)). Zn(2+) is bound by residues Cys147, Cys150, Cys163, Cys166, Cys185, Cys188, Cys199, and Cys202. CXXCXGXG motif repeat units lie at residues 147 to 154 (CKPCEGTG), 163 to 170 (CPTCKGQG), 185 to 192 (CPRCGGTG), and 199 to 206 (CKSCKGTG).

Belongs to the DnaJ family. In terms of assembly, homodimer. Zn(2+) serves as cofactor.

The protein resides in the cytoplasm. Functionally, participates actively in the response to hyperosmotic and heat shock by preventing the aggregation of stress-denatured proteins and by disaggregating proteins, also in an autonomous, DnaK-independent fashion. Unfolded proteins bind initially to DnaJ; upon interaction with the DnaJ-bound protein, DnaK hydrolyzes its bound ATP, resulting in the formation of a stable complex. GrpE releases ADP from DnaK; ATP binding to DnaK triggers the release of the substrate protein, thus completing the reaction cycle. Several rounds of ATP-dependent interactions between DnaJ, DnaK and GrpE are required for fully efficient folding. Also involved, together with DnaK and GrpE, in the DNA replication of plasmids through activation of initiation proteins. This Aliarcobacter butzleri (strain RM4018) (Arcobacter butzleri) protein is Chaperone protein DnaJ.